The primary structure comprises 274 residues: Homeobox-leucine zipper protein HAT9 (274 aa).

The span at 64-74 (SSHSGVSSFSS) shows a compositional bias: low complexity. The disordered stretch occupies residues 64 to 96 (SSHSGVSSFSSGRVVKRERDGGEESPEEEEMTE). A DNA-binding region (homeobox) is located at residues 110 to 169 (SARKKLRLTKQQSALLEESFKDHSTLNPKQKQVLARQLNLRPRQVEVWFQNRRARTKLKQ). The tract at residues 177–198 (LKKCCETLADENIRLQKEIQEL) is leucine-zipper.

Belongs to the HD-ZIP homeobox family. Class II subfamily.

It is found in the nucleus. Probable transcription factor. The polypeptide is Homeobox-leucine zipper protein HAT9 (HAT9) (Arabidopsis thaliana (Mouse-ear cress)).